The chain runs to 378 residues: Pseudouridine kinase (378 aa).

Pseudouridine is bound by residues aspartate 12, threonine 26, glycine 37–asparagine 41, valine 38, asparagine 137, and lysine 166. Residues serine 181 and threonine 237 each contribute to the Mg(2+) site. Threonine 237, glycine 239, glycine 242, threonine 298, leucine 306, and glycine 310 together coordinate ATP. Aspartate 311 serves as a coordination point for pseudouridine.

The protein belongs to the carbohydrate kinase PfkB family. As to quaternary structure, forms homodimers.

The protein resides in the peroxisome. The enzyme catalyses pseudouridine + ATP = psi-UMP + ADP + H(+). Its function is as follows. Catalyzes the phosphorylation of pseudouridine to pseudouridine 5'-phosphate (PsiMP). Catalyzes the first step in a pseudouridine degradation pathway. Acts together with the pseudouridine 5'-phosphate glycosidase PUMY in the peroxisome to prevent toxic pseudouridine monophosphate accumulation. The chain is Pseudouridine kinase from Arabidopsis thaliana (Mouse-ear cress).